The sequence spans 224 residues: Cysteine S-methyltransferase NleE (224 aa).

The tract at residues 49–52 (GITR) is interaction with host proteins TAB2, TAB3 and ZRANB3. Ala92, Ser98, Arg107, Gln111, Tyr204, and Glu208 together coordinate S-adenosyl-L-methionine.

It belongs to the NleE/OspZ family. As to quaternary structure, monomer.

It localises to the secreted. Its subcellular location is the host nucleus. The catalysed reaction is L-cysteinyl-[protein] + S-adenosyl-L-methionine = S-methyl-L-cysteinyl-[protein] + S-adenosyl-L-homocysteine + H(+). In terms of biological role, cysteine methyltransferase effector that inhibits host cell NF-kappa-B activation by preventing nuclear translocation of host protein RELA/p65. Acts by mediating cysteine methylation of host proteins TAB2 and TAB3: methylation of a conserved cysteine residue of the RanBP2-type zinc finger (NZF) of TAB2 and TAB3 disrupts zinc-binding, thereby inactivating the ubiquitin chain-binding activity of TAB2 and TAB3, leading to NF-kappa-B inactivation. Also mediates cysteine methylation of host protein ZRANB3, inactivating its ability to bind ubiquitin chains. This is Cysteine S-methyltransferase NleE from Escherichia coli O127:H6 (strain E2348/69 / EPEC).